A 740-amino-acid polypeptide reads, in one-letter code: DNA-directed RNA polymerase subunit beta' (740 aa).

Zn(2+) is bound by residues C65, C67, C103, and C106. Mg(2+)-binding residues include D539, D541, and D543.

Belongs to the RNA polymerase beta' chain family. RpoC1 subfamily. As to quaternary structure, in plastids the minimal PEP RNA polymerase catalytic core is composed of four subunits: alpha, beta, beta', and beta''. When a (nuclear-encoded) sigma factor is associated with the core the holoenzyme is formed, which can initiate transcription. Mg(2+) serves as cofactor. Requires Zn(2+) as cofactor.

The protein resides in the plastid. The protein localises to the chloroplast. The catalysed reaction is RNA(n) + a ribonucleoside 5'-triphosphate = RNA(n+1) + diphosphate. In terms of biological role, DNA-dependent RNA polymerase catalyzes the transcription of DNA into RNA using the four ribonucleoside triphosphates as substrates. This is DNA-directed RNA polymerase subunit beta' from Ostreococcus tauri.